The chain runs to 191 residues: dCTP deaminase (191 aa).

DCTP is bound by residues 112-117 (KSTYAR), 136-138 (TLE), Gln-157, Tyr-173, and Gln-183. The Proton donor/acceptor role is filled by Glu-138.

This sequence belongs to the dCTP deaminase family. As to quaternary structure, homotrimer.

It carries out the reaction dCTP + H2O + H(+) = dUTP + NH4(+). The protein operates within pyrimidine metabolism; dUMP biosynthesis; dUMP from dCTP (dUTP route): step 1/2. In terms of biological role, catalyzes the deamination of dCTP to dUTP. In Psychrobacter arcticus (strain DSM 17307 / VKM B-2377 / 273-4), this protein is dCTP deaminase.